The following is a 95-amino-acid chain: Aspartyl/glutamyl-tRNA(Asn/Gln) amidotransferase subunit C (95 aa).

The protein belongs to the GatC family. Heterotrimer of A, B and C subunits.

It catalyses the reaction L-glutamyl-tRNA(Gln) + L-glutamine + ATP + H2O = L-glutaminyl-tRNA(Gln) + L-glutamate + ADP + phosphate + H(+). The enzyme catalyses L-aspartyl-tRNA(Asn) + L-glutamine + ATP + H2O = L-asparaginyl-tRNA(Asn) + L-glutamate + ADP + phosphate + 2 H(+). Functionally, allows the formation of correctly charged Asn-tRNA(Asn) or Gln-tRNA(Gln) through the transamidation of misacylated Asp-tRNA(Asn) or Glu-tRNA(Gln) in organisms which lack either or both of asparaginyl-tRNA or glutaminyl-tRNA synthetases. The reaction takes place in the presence of glutamine and ATP through an activated phospho-Asp-tRNA(Asn) or phospho-Glu-tRNA(Gln). This is Aspartyl/glutamyl-tRNA(Asn/Gln) amidotransferase subunit C from Syntrophus aciditrophicus (strain SB).